A 172-amino-acid polypeptide reads, in one-letter code: Ribosome maturation factor RimM (172 aa).

A PRC barrel domain is found at 93–167 (DEHEFYYHEI…RVVITPIPGM (75 aa)).

It belongs to the RimM family. In terms of assembly, binds ribosomal protein uS19.

It is found in the cytoplasm. An accessory protein needed during the final step in the assembly of 30S ribosomal subunit, possibly for assembly of the head region. Essential for efficient processing of 16S rRNA. May be needed both before and after RbfA during the maturation of 16S rRNA. It has affinity for free ribosomal 30S subunits but not for 70S ribosomes. In Exiguobacterium sp. (strain ATCC BAA-1283 / AT1b), this protein is Ribosome maturation factor RimM.